We begin with the raw amino-acid sequence, 363 residues long: Chorismate synthase (363 aa).

NADP(+) contacts are provided by arginine 48 and arginine 54. Residues 131-133 (RSS), 244-245 (NA), glycine 288, 303-307 (KPTSS), and arginine 329 contribute to the FMN site.

This sequence belongs to the chorismate synthase family. As to quaternary structure, homotetramer. It depends on FMNH2 as a cofactor.

It carries out the reaction 5-O-(1-carboxyvinyl)-3-phosphoshikimate = chorismate + phosphate. It participates in metabolic intermediate biosynthesis; chorismate biosynthesis; chorismate from D-erythrose 4-phosphate and phosphoenolpyruvate: step 7/7. Catalyzes the anti-1,4-elimination of the C-3 phosphate and the C-6 proR hydrogen from 5-enolpyruvylshikimate-3-phosphate (EPSP) to yield chorismate, which is the branch point compound that serves as the starting substrate for the three terminal pathways of aromatic amino acid biosynthesis. This reaction introduces a second double bond into the aromatic ring system. The sequence is that of Chorismate synthase from Maricaulis maris (strain MCS10) (Caulobacter maris).